A 114-amino-acid polypeptide reads, in one-letter code: Iron-sulfur cluster insertion protein ErpA (114 aa).

Iron-sulfur cluster contacts are provided by Cys42, Cys106, and Cys108.

The protein belongs to the HesB/IscA family. In terms of assembly, homodimer. Iron-sulfur cluster is required as a cofactor.

Functionally, required for insertion of 4Fe-4S clusters for at least IspG. The polypeptide is Iron-sulfur cluster insertion protein ErpA (Erwinia tasmaniensis (strain DSM 17950 / CFBP 7177 / CIP 109463 / NCPPB 4357 / Et1/99)).